The sequence spans 389 residues: S-adenosylmethionine synthase (389 aa).

Position 19 (His19) interacts with ATP. Position 21 (Asp21) interacts with Mg(2+). Glu47 is a K(+) binding site. L-methionine-binding residues include Glu60 and Gln103. Residues 103-113 (QSVDIAQGVSR) are flexible loop. ATP is bound by residues 168–170 (DGK), 234–235 (RF), Asp243, 249–250 (RK), Ala266, and Lys270. Asp243 is a binding site for L-methionine. Position 274 (Lys274) interacts with L-methionine.

Belongs to the AdoMet synthase family. Homotetramer; dimer of dimers. Mg(2+) is required as a cofactor. It depends on K(+) as a cofactor.

The protein resides in the cytoplasm. The catalysed reaction is L-methionine + ATP + H2O = S-adenosyl-L-methionine + phosphate + diphosphate. It functions in the pathway amino-acid biosynthesis; S-adenosyl-L-methionine biosynthesis; S-adenosyl-L-methionine from L-methionine: step 1/1. In terms of biological role, catalyzes the formation of S-adenosylmethionine (AdoMet) from methionine and ATP. The overall synthetic reaction is composed of two sequential steps, AdoMet formation and the subsequent tripolyphosphate hydrolysis which occurs prior to release of AdoMet from the enzyme. The polypeptide is S-adenosylmethionine synthase (Solidesulfovibrio magneticus (strain ATCC 700980 / DSM 13731 / RS-1) (Desulfovibrio magneticus)).